The sequence spans 162 residues: Putative pre-16S rRNA nuclease (162 aa).

It belongs to the YqgF nuclease family.

The protein resides in the cytoplasm. Functionally, could be a nuclease involved in processing of the 5'-end of pre-16S rRNA. This Brucella abortus (strain S19) protein is Putative pre-16S rRNA nuclease.